The primary structure comprises 29 residues: Trypsin inhibitor 3 (29 aa).

3 cysteine pairs are disulfide-bonded: Cys-3-Cys-20, Cys-10-Cys-22, and Cys-16-Cys-28.

This sequence belongs to the protease inhibitor I7 (squash-type serine protease inhibitor) family.

The protein resides in the secreted. Inhibits trypsin. This Luffa aegyptiaca (Sponge gourd) protein is Trypsin inhibitor 3.